Reading from the N-terminus, the 571-residue chain is Plastidial pyruvate kinase 3, chloroplastic (571 aa).

Residues 1–55 (MAAYGQISSGMTVDPQVLSSSRNIGVSLSPLRRTLIGAGVRSTSISLRQCSLSVR) constitute a chloroplast transit peptide. Arginine 129 lines the substrate pocket. K(+)-binding residues include asparagine 131, serine 133, aspartate 164, and threonine 165. 131-134 (NMSH) serves as a coordination point for ATP. An ATP-binding site is contributed by arginine 171. Lysine 314 is a binding site for substrate. Residue glutamate 316 coordinates Mg(2+). Substrate contacts are provided by glycine 339, aspartate 340, and threonine 372. Residue aspartate 340 coordinates Mg(2+).

It belongs to the pyruvate kinase family. Oligomer of alpha and beta subunits. Requires Mg(2+) as cofactor. K(+) serves as cofactor. In terms of tissue distribution, expressed at low levels in roots, leaves, inflorescences, siliques, pollen, seeds and flowers.

The protein resides in the plastid. It localises to the chloroplast stroma. It catalyses the reaction pyruvate + ATP = phosphoenolpyruvate + ADP + H(+). Its pathway is carbohydrate degradation; glycolysis; pyruvate from D-glyceraldehyde 3-phosphate: step 5/5. Required for plastidial pyruvate kinase activity. The chain is Plastidial pyruvate kinase 3, chloroplastic (PKP3) from Arabidopsis thaliana (Mouse-ear cress).